The primary structure comprises 318 residues: C1GALT1-specific chaperone 1 (318 aa).

Residues 1-6 (MLSESS) lie on the Cytoplasmic side of the membrane. The chain crosses the membrane as a helical; Signal-anchor for type II membrane protein span at residues 7–26 (SFLKGVMLGSIFCALITMLG). The Lumenal portion of the chain corresponds to 27–318 (HIRIGHGNRM…FLPPNGSDND (292 aa)).

The protein belongs to the glycosyltransferase 31 family. Beta3-Gal-T subfamily. Associates with core 1 beta-3-galactosyltransferase (C1GALT1), probably not with the soluble active form. As to expression, ubiquitously expressed. Abundantly expressed in salivary gland, stomach, small intestine, kidney, and testis and at intermediate levels in whole brain, cerebellum, spinal cord, thymus, spleen, trachea, lung, pancreas, ovary, and uterus.

The protein localises to the membrane. Probable chaperone required for the generation of 1 O-glycan Gal-beta1-3GalNAc-alpha1-Ser/Thr (T antigen), which is a precursor for many extended O-glycans in glycoproteins. Probably acts as a specific molecular chaperone assisting the folding/stability of core 1 beta-3-galactosyltransferase (C1GALT1). This chain is C1GALT1-specific chaperone 1 (C1GALT1C1), found in Homo sapiens (Human).